The primary structure comprises 267 residues: Large ribosomal subunit protein bL9m (267 aa).

A mitochondrion-targeting transit peptide spans 1–52 (MAAPVVTAPGRALLRAGAGRLLRGGVQELLRPRHEGNAPDLACNFSLSQNRG).

Belongs to the bacterial ribosomal protein bL9 family. Component of the mitochondrial large ribosomal subunit (mt-LSU). Mature mammalian 55S mitochondrial ribosomes consist of a small (28S) and a large (39S) subunit. The 28S small subunit contains a 12S ribosomal RNA (12S mt-rRNA) and 30 different proteins. The 39S large subunit contains a 16S rRNA (16S mt-rRNA), a copy of mitochondrial valine transfer RNA (mt-tRNA(Val)), which plays an integral structural role, and 52 different proteins.

It is found in the mitochondrion. In Homo sapiens (Human), this protein is Large ribosomal subunit protein bL9m (MRPL9).